A 509-amino-acid polypeptide reads, in one-letter code: Zinc finger protein CKR1 (509 aa).

In terms of domain architecture, KRAB spans 1-61; sequence MEPYVLLDPR…GSEEPQTHPP (61 aa). 2 stretches are compositionally biased toward basic and acidic residues: residues 41-50 and 98-112; these read EDAVGLKEDA and PKRD…RDRP. Residues 41–114 form a disordered region; the sequence is EDAVGLKEDA…PSRVRDRPFG (74 aa). 11 consecutive C2H2-type zinc fingers follow at residues 113 to 135, 141 to 163, 169 to 191, 197 to 219, 225 to 247, 279 to 303, 303 to 325, 331 to 353, 359 to 383, 387 to 409, and 415 to 437; these read FGCP…RRVH, YSCP…RRTH, HKCQ…SRGH, HRCG…RRVH, YECP…RRSH, QRCA…ERSH, FPCG…GKTH, YKCG…GHAA, and FTCG…RRVH. The interval 428 to 479 is disordered; sequence SHLTKHRRSHGPKAPLLPVQGRGEAGEPLRASPLSSGAEQRDGRRAQRGGVE.

The protein belongs to the krueppel C2H2-type zinc-finger protein family.

The protein localises to the nucleus. The sequence is that of Zinc finger protein CKR1 from Gallus gallus (Chicken).